Reading from the N-terminus, the 362-residue chain is Phosphoserine aminotransferase (362 aa).

Arg-43 contributes to the L-glutamate binding site. Residues 77–78, Trp-103, Thr-153, Asp-173, and Gln-196 each bind pyridoxal 5'-phosphate; that span reads AR. N6-(pyridoxal phosphate)lysine is present on Lys-197.

Belongs to the class-V pyridoxal-phosphate-dependent aminotransferase family. SerC subfamily. In terms of assembly, homodimer. Requires pyridoxal 5'-phosphate as cofactor.

The protein resides in the cytoplasm. It catalyses the reaction O-phospho-L-serine + 2-oxoglutarate = 3-phosphooxypyruvate + L-glutamate. The enzyme catalyses 4-(phosphooxy)-L-threonine + 2-oxoglutarate = (R)-3-hydroxy-2-oxo-4-phosphooxybutanoate + L-glutamate. Its pathway is amino-acid biosynthesis; L-serine biosynthesis; L-serine from 3-phospho-D-glycerate: step 2/3. It functions in the pathway cofactor biosynthesis; pyridoxine 5'-phosphate biosynthesis; pyridoxine 5'-phosphate from D-erythrose 4-phosphate: step 3/5. Catalyzes the reversible conversion of 3-phosphohydroxypyruvate to phosphoserine and of 3-hydroxy-2-oxo-4-phosphonooxybutanoate to phosphohydroxythreonine. This Legionella pneumophila subsp. pneumophila (strain Philadelphia 1 / ATCC 33152 / DSM 7513) protein is Phosphoserine aminotransferase.